The chain runs to 90 residues: Mitochondrial import inner membrane translocase subunit Tim10-B (90 aa).

The Twin CX3C motif signature appears at 29–54 (CHKKCVPPHYKEAELSKGESVCLDRC). Cystine bridges form between Cys-29–Cys-54 and Cys-33–Cys-50.

The protein belongs to the small Tim family. Heterohexamer; composed of 3 copies of TIMM9 and 3 copies of TIMM10/TIM10A, named soluble 70 kDa complex. The complex forms a 6-bladed alpha-propeller structure and associates with the TIMM22 component of the TIM22 complex. Interacts with multi-pass transmembrane proteins in transit.

It localises to the mitochondrion inner membrane. Mitochondrial intermembrane chaperone that participates in the import and insertion of multi-pass transmembrane proteins into the mitochondrial inner membrane. May also be required for the transfer of beta-barrel precursors from the TOM complex to the sorting and assembly machinery (SAM complex) of the outer membrane. Acts as a chaperone-like protein that protects the hydrophobic precursors from aggregation and guide them through the mitochondrial intermembrane space. This Xenopus laevis (African clawed frog) protein is Mitochondrial import inner membrane translocase subunit Tim10-B (timm10-b).